Here is an 850-residue protein sequence, read N- to C-terminus: DNA mismatch repair protein MutS (850 aa).

An ATP-binding site is contributed by 608–615; sequence GPNMGGKS.

The protein belongs to the DNA mismatch repair MutS family.

In terms of biological role, this protein is involved in the repair of mismatches in DNA. It is possible that it carries out the mismatch recognition step. This protein has a weak ATPase activity. The sequence is that of DNA mismatch repair protein MutS from Thiobacillus denitrificans (strain ATCC 25259 / T1).